We begin with the raw amino-acid sequence, 342 residues long: Platelet-activating factor receptor (342 aa).

Residues 1–16 (MEPNNSFRVDSEFRYT) are Extracellular-facing. Asn4 carries an N-linked (GlcNAc...) asparagine glycan. A helical membrane pass occupies residues 17-38 (LFPIFYSIVFVLGVIANSYVLW). The Cytoplasmic portion of the chain corresponds to 39–54 (VFARLYPSKKFNEIKI). Residues 55–74 (FMVNLTMADLLFLVTLPLWI) form a helical membrane-spanning segment. Residues 75-91 (VYYYNQGDWILPKFLCN) are Extracellular-facing. Residues Cys90 and Cys173 are joined by a disulfide bond. The chain crosses the membrane as a helical span at residues 92 to 113 (LAGCFFFINTYCSVAFLAVITY). The Cytoplasmic portion of the chain corresponds to 114–133 (NRFQAVTRPIKTAQATTRKR). Residues 134 to 155 (GFLLSLIIWVSIVGAASYFFVL) form a helical membrane-spanning segment. Residues 156–184 (DSTNSEPKKTGSGNITRCFEHYEKGSIPV) lie on the Extracellular side of the membrane. Residue Asn169 is glycosylated (N-linked (GlcNAc...) asparagine). The helical transmembrane segment at 185–205 (LIIHIFLVFSFFLVFLIILFC) threads the bilayer. The Cytoplasmic portion of the chain corresponds to 206–233 (NLVIIRTLLTQQVQMQRNAEVKRRALWM). A helical transmembrane segment spans residues 234-254 (VCTVLAVFVICFVPHHLVQLP). Residues 255-276 (WTLAELGFQDTDFHQGINDAHQ) are Extracellular-facing. The helical transmembrane segment at 277–296 (VTLCLLSTNCVLDPIIYCFL) threads the bilayer. Residues 297–342 (TKKFRKHLTEKLYSMRESRKCSRATSETGTEVVVQLKDAPIKSLKY) are Cytoplasmic-facing.

Belongs to the G-protein coupled receptor 1 family. As to quaternary structure, interacts with ARRB1.

The protein resides in the cell membrane. Functionally, receptor for platelet activating factor, a chemotactic phospholipid mediator that possesses potent inflammatory, smooth-muscle contractile and hypotensive activity. Seems to mediate its action via a G protein that activates a phosphatidylinositol-calcium second messenger system. This is Platelet-activating factor receptor from Capra hircus (Goat).